Here is a 78-residue protein sequence, read N- to C-terminus: Acyl carrier protein (78 aa).

Positions 2 to 77 (SDILERVRKI…DAVKFITEKT (76 aa)) constitute a Carrier domain. The residue at position 37 (serine 37) is an O-(pantetheine 4'-phosphoryl)serine.

Belongs to the acyl carrier protein (ACP) family. Post-translationally, 4'-phosphopantetheine is transferred from CoA to a specific serine of apo-ACP by AcpS. This modification is essential for activity because fatty acids are bound in thioester linkage to the sulfhydryl of the prosthetic group.

Its subcellular location is the cytoplasm. It functions in the pathway lipid metabolism; fatty acid biosynthesis. In terms of biological role, carrier of the growing fatty acid chain in fatty acid biosynthesis. This is Acyl carrier protein from Caulobacter vibrioides (strain ATCC 19089 / CIP 103742 / CB 15) (Caulobacter crescentus).